The following is a 110-amino-acid chain: Inner membrane protein YgiZ (110 aa).

The Cytoplasmic segment spans residues 1–8 (MLKQKIKT). The helical transmembrane segment at 9–29 (IFEALLYIMLTYWLIDSFFAF) threads the bilayer. At 30 to 53 (NKYDWMLESGGNICSIPSVSGEDR) the chain is on the periplasmic side. Residues 54-74 (ILQAMIAAFFLLTPLIILILR) traverse the membrane as a helical segment. Residues 75-83 (KLFMREMFE) are Cytoplasmic-facing. A helical transmembrane segment spans residues 84–104 (FWVYVFSLGICLVCGWWLFWG). At 105 to 110 (RFIFCY) the chain is on the periplasmic side.

It localises to the cell inner membrane. This Escherichia coli (strain K12) protein is Inner membrane protein YgiZ (ygiZ).